An 827-amino-acid chain; its full sequence is N-terminal kinase-like protein (827 aa).

The 309-residue stretch at 1-309 folds into the Protein kinase domain; it reads MWFWSRDPAR…PEDFCRHKIL (309 aa). HEAT repeat units lie at residues 345–383, 384–422, and 502–540; these read IIPVVVKMFSSTDRAMRIRLLQQMENFIQYLNEPTVNAQ, IFPHVVHGFMDTNPAIREQTVKSMLLLAPKLNENNLNME, and VLPVLCGVTVDPEKNVREQAFKAIRSFLDKLETVSEDPS. The span at 586-624 shows a compositional bias: low complexity; that stretch reads DAAASEGASAPSTASEASKPDTAPSSSAPPAAASTAPTS. Residues 586–827 form a disordered region; it reads DAAASEGASA…PLKLGVRKLD (242 aa). Basic and acidic residues predominate over residues 630–640; that stretch reads EKGAPDNSLDR. The span at 641 to 652 shows a compositional bias: acidic residues; it reads WDDEDWGSLEDA. The span at 667 to 678 shows a compositional bias: basic and acidic residues; that stretch reads DWGHGKTQEKTV. 2 stretches are compositionally biased toward polar residues: residues 679–690 and 737–746; these read DFSSSRSKTKQV and NWDTSGSSGR. Acidic residues predominate over residues 774–783; the sequence is GGDDNWESVE. The stretch at 788-817 forms a coiled coil; it reads LSKAEMARKKREERQKEIEAKRAERRAAKG. A compositionally biased stretch (basic and acidic residues) spans 792–814; sequence EMARKKREERQKEIEAKRAERRA.

Belongs to the protein kinase superfamily.

In terms of biological role, regulates COPI-mediated retrograde protein traffic at the interface between the Golgi apparatus and the endoplasmic reticulum. Involved in the maintenance of the Golgi apparatus morphology. The sequence is that of N-terminal kinase-like protein (scyl1) from Xenopus tropicalis (Western clawed frog).